Reading from the N-terminus, the 402-residue chain is tRNA(Met) cytidine acetate ligase (402 aa).

Residues 7 to 20 (ITEYNPFHLGHELH), G102, N171, and R196 each bind ATP.

The protein belongs to the TmcAL family.

It is found in the cytoplasm. It carries out the reaction cytidine(34) in elongator tRNA(Met) + acetate + ATP = N(4)-acetylcytidine(34) in elongator tRNA(Met) + AMP + diphosphate. Catalyzes the formation of N(4)-acetylcytidine (ac(4)C) at the wobble position of elongator tRNA(Met), using acetate and ATP as substrates. First activates an acetate ion to form acetyladenylate (Ac-AMP) and then transfers the acetyl group to tRNA to form ac(4)C34. The sequence is that of tRNA(Met) cytidine acetate ligase from Clostridium perfringens (strain SM101 / Type A).